Consider the following 636-residue polypeptide: 1-deoxy-D-xylulose-5-phosphate synthase (636 aa).

Thiamine diphosphate-binding positions include His73 and 114–116 (SHA). Asp146 contributes to the Mg(2+) binding site. Thiamine diphosphate is bound by residues 147–148 (GA), Asn176, Tyr287, and Glu368. Position 176 (Asn176) interacts with Mg(2+).

Belongs to the transketolase family. DXPS subfamily. In terms of assembly, homodimer. Mg(2+) serves as cofactor. Requires thiamine diphosphate as cofactor.

It carries out the reaction D-glyceraldehyde 3-phosphate + pyruvate + H(+) = 1-deoxy-D-xylulose 5-phosphate + CO2. Its pathway is metabolic intermediate biosynthesis; 1-deoxy-D-xylulose 5-phosphate biosynthesis; 1-deoxy-D-xylulose 5-phosphate from D-glyceraldehyde 3-phosphate and pyruvate: step 1/1. In terms of biological role, catalyzes the acyloin condensation reaction between C atoms 2 and 3 of pyruvate and glyceraldehyde 3-phosphate to yield 1-deoxy-D-xylulose-5-phosphate (DXP). The protein is 1-deoxy-D-xylulose-5-phosphate synthase of Corynebacterium glutamicum (strain ATCC 13032 / DSM 20300 / JCM 1318 / BCRC 11384 / CCUG 27702 / LMG 3730 / NBRC 12168 / NCIMB 10025 / NRRL B-2784 / 534).